We begin with the raw amino-acid sequence, 156 residues long: 6,7-dimethyl-8-ribityllumazine synthase (156 aa).

5-amino-6-(D-ribitylamino)uracil is bound by residues F22, 57-59 (AYE), and 81-83 (TVI). 86 to 87 (GT) is a binding site for (2S)-2-hydroxy-3-oxobutyl phosphate. The active-site Proton donor is the H89. F114 contributes to the 5-amino-6-(D-ribitylamino)uracil binding site. (2S)-2-hydroxy-3-oxobutyl phosphate is bound at residue R128.

The protein belongs to the DMRL synthase family. Forms an icosahedral capsid composed of 60 subunits, arranged as a dodecamer of pentamers.

It carries out the reaction (2S)-2-hydroxy-3-oxobutyl phosphate + 5-amino-6-(D-ribitylamino)uracil = 6,7-dimethyl-8-(1-D-ribityl)lumazine + phosphate + 2 H2O + H(+). It functions in the pathway cofactor biosynthesis; riboflavin biosynthesis; riboflavin from 2-hydroxy-3-oxobutyl phosphate and 5-amino-6-(D-ribitylamino)uracil: step 1/2. Its function is as follows. Catalyzes the formation of 6,7-dimethyl-8-ribityllumazine by condensation of 5-amino-6-(D-ribitylamino)uracil with 3,4-dihydroxy-2-butanone 4-phosphate. This is the penultimate step in the biosynthesis of riboflavin. This Sodalis glossinidius (strain morsitans) protein is 6,7-dimethyl-8-ribityllumazine synthase.